The primary structure comprises 186 residues: Large ribosomal subunit protein uL10 (186 aa).

In terms of assembly, part of the ribosomal stalk of the 50S ribosomal subunit. The N-terminus interacts with L11 and the large rRNA to form the base of the stalk. The C-terminus forms an elongated spine to which L12 dimers bind in a sequential fashion forming a multimeric L10(L12)X complex.

Its function is as follows. Forms part of the ribosomal stalk, playing a central role in the interaction of the ribosome with GTP-bound translation factors. The chain is Large ribosomal subunit protein uL10 from Rhodopseudomonas palustris (strain ATCC BAA-98 / CGA009).